Here is a 494-residue protein sequence, read N- to C-terminus: Aspartyl/glutamyl-tRNA(Asn/Gln) amidotransferase subunit B (494 aa).

It belongs to the GatB/GatE family. GatB subfamily. Heterotrimer of A, B and C subunits.

It carries out the reaction L-glutamyl-tRNA(Gln) + L-glutamine + ATP + H2O = L-glutaminyl-tRNA(Gln) + L-glutamate + ADP + phosphate + H(+). The enzyme catalyses L-aspartyl-tRNA(Asn) + L-glutamine + ATP + H2O = L-asparaginyl-tRNA(Asn) + L-glutamate + ADP + phosphate + 2 H(+). Allows the formation of correctly charged Asn-tRNA(Asn) or Gln-tRNA(Gln) through the transamidation of misacylated Asp-tRNA(Asn) or Glu-tRNA(Gln) in organisms which lack either or both of asparaginyl-tRNA or glutaminyl-tRNA synthetases. The reaction takes place in the presence of glutamine and ATP through an activated phospho-Asp-tRNA(Asn) or phospho-Glu-tRNA(Gln). The chain is Aspartyl/glutamyl-tRNA(Asn/Gln) amidotransferase subunit B from Synechococcus sp. (strain CC9902).